Here is a 152-residue protein sequence, read N- to C-terminus: Deoxyuridine 5'-triphosphate nucleotidohydrolase (152 aa).

Substrate is bound by residues 71-73 (RSG), Asn84, 88-90 (LID), and Met98.

Belongs to the dUTPase family. Mg(2+) is required as a cofactor.

It catalyses the reaction dUTP + H2O = dUMP + diphosphate + H(+). It functions in the pathway pyrimidine metabolism; dUMP biosynthesis; dUMP from dCTP (dUTP route): step 2/2. Functionally, this enzyme is involved in nucleotide metabolism: it produces dUMP, the immediate precursor of thymidine nucleotides and it decreases the intracellular concentration of dUTP so that uracil cannot be incorporated into DNA. This Shewanella baltica (strain OS185) protein is Deoxyuridine 5'-triphosphate nucleotidohydrolase.